The sequence spans 271 residues: uncharacterized protein (271 aa).

The signal sequence occupies residues 1-22 (MARELLFLACAIVIADSWPAKA).

This is an uncharacterized protein from Sinorhizobium fredii (strain NBRC 101917 / NGR234).